Consider the following 276-residue polypeptide: NH(3)-dependent NAD(+) synthetase (276 aa).

ATP is bound at residue 43–50 (GISGGVDS). D49 contacts Mg(2+). Deamido-NAD(+) is bound at residue R146. Position 166 (T166) interacts with ATP. Mg(2+) is bound at residue E171. Residues K179 and D186 each contribute to the deamido-NAD(+) site. Positions 195 and 217 each coordinate ATP. Residue 266–267 (HK) participates in deamido-NAD(+) binding.

This sequence belongs to the NAD synthetase family. In terms of assembly, homodimer.

The enzyme catalyses deamido-NAD(+) + NH4(+) + ATP = AMP + diphosphate + NAD(+) + H(+). The protein operates within cofactor biosynthesis; NAD(+) biosynthesis; NAD(+) from deamido-NAD(+) (ammonia route): step 1/1. In terms of biological role, catalyzes the ATP-dependent amidation of deamido-NAD to form NAD. Uses ammonia as a nitrogen source. The polypeptide is NH(3)-dependent NAD(+) synthetase (Shewanella amazonensis (strain ATCC BAA-1098 / SB2B)).